Here is a 616-residue protein sequence, read N- to C-terminus: MVGQLSEGAIAAIMQKGDTNIKPILQVINIRPITTGNSPPRYRLLMSDGLNTLSSFMSATQLNPLVEQEQLSSNCVCQINRFIVNTLKDGRRVVILMELEVLKSAEVVGVKIGNPVPYNEGLGQPQVAPPAPAASPAASSRPQPQNGTSGAGSTVSKAYGASKTFGKAAGPSLSHNSGGTQSKVVPIASLTPYQSKWTICARVTNKSQIRTWSNSRGEEKLFSLELVDESGEIRATAFNEQVDKFFPLIEVNKVYYFSKGTLKIANKQFTAVKNDYEMTFNNETSVMPCEDDHHLPTVQFDFTGIDDLENKSKDSLVDIIGICKSYEDATKITVRSNNREVAKRNIYLMDTSGKVVTATLWGEDADKFDGSRQPVLAIKGARVSDFGGRSLSVLSSSTIIANPDIPEAYKLRGWFDAEGQALDGVSISDLKSGGVGGGNTNWKTLYEVKSENLGQGDKPDYFSSVATVVYLRKENCMYQACPTQDCNKKVIDQQNGLYRCEKCDTEFPNFKYRMILSVNIADFQENQWVTCFQESAEAILGQNAAYLGELKDKNEQAFEEVFQNANFRSFIFRVRVKVETYNDESRIKATVMDVKPVDYREYGRRLVMSIRRSALM.

Position 1 is an N-acetylmethionine (Met-1). Residues Lys-22 and Lys-88 each participate in a glycyl lysine isopeptide (Lys-Gly) (interchain with G-Cter in ubiquitin) cross-link. Positions 121–155 (GLGQPQVAPPAPAASPAASSRPQPQNGTSGAGSTV) are disordered. The span at 134–145 (ASPAASSRPQPQ) shows a compositional bias: low complexity. A compositionally biased stretch (polar residues) spans 146 to 155 (NGTSGAGSTV). 2 positions are modified to N6-acetyllysine; alternate: Lys-163 and Lys-167. Glycyl lysine isopeptide (Lys-Gly) (interchain with G-Cter in ubiquitin); alternate cross-links involve residues Lys-163 and Lys-167. A Phosphothreonine modification is found at Thr-180. Lys-183 is covalently cross-linked (Glycyl lysine isopeptide (Lys-Gly) (interchain with G-Cter in ubiquitin)). The residue at position 191 (Thr-191) is a Phosphothreonine. Residues 197-281 (WTICARVTNK…VKNDYEMTFN (85 aa)) constitute a DNA-binding region (OB). Residues Lys-220 and Lys-244 each participate in a glycyl lysine isopeptide (Lys-Gly) (interchain with G-Cter in ubiquitin) cross-link. N6-acetyllysine; alternate is present on Lys-259. A Glycyl lysine isopeptide (Lys-Gly) (interchain with G-Cter in ubiquitin); alternate cross-link involves residue Lys-259. Residues Lys-267 and Lys-331 each participate in a glycyl lysine isopeptide (Lys-Gly) (interchain with G-Cter in ubiquitin) cross-link. The residue at position 384 (Ser-384) is a Phosphoserine. Residues Lys-410 and Lys-431 each participate in a glycyl lysine isopeptide (Lys-Gly) (interchain with G-Cter in ubiquitin) cross-link. Residue Lys-449 forms a Glycyl lysine isopeptide (Lys-Gly) (interchain with G-Cter in SUMO) linkage. A Glycyl lysine isopeptide (Lys-Gly) (interchain with G-Cter in ubiquitin) cross-link involves residue Lys-458. The segment at 481–503 (CPTQDCNKKVIDQQNGLYRCEKC) adopts a C4-type zinc-finger fold. A Glycyl lysine isopeptide (Lys-Gly) (interchain with G-Cter in ubiquitin) cross-link involves residue Lys-553. Lys-577 is covalently cross-linked (Glycyl lysine isopeptide (Lys-Gly) (interchain with G-Cter in SUMO)).

Belongs to the replication factor A protein 1 family. As to quaternary structure, component of the canonical replication protein A complex (RPA), a heterotrimer composed of RPA1, RPA2 and RPA3. The DNA-binding activity may reside exclusively on the RPA1 subunit. Interacts with PRPF19; the PRP19-CDC5L complex is recruited to the sites of DNA repair where it ubiquitinates the replication protein A complex (RPA). Interacts with RIPK1. Interacts with the polymerase alpha subunit POLA1/p180; this interaction stabilizes the replicative complex and reduces the misincorporation rate of DNA polymerase alpha by acting as a fidelity clamp. Interacts with RAD51 and SENP6 to regulate DNA repair. Interacts with HELB; this interaction promotes HELB recruitment to chromatin following DNA damage. Interacts with PRIMPOL; leading to recruit PRIMPOL on chromatin and stimulate its DNA primase activity. Interacts with XPA; the interaction is direct and associates XPA with the RPA complex. Interacts with ETAA1; the interaction is direct and promotes ETAA1 recruitment at stalled replication forks. Interacts with RPA1; this interaction associates HROB with the RPA complex. Interacts (when poly-ADP-ribosylated) with HTATSF1. Post-translationally, DNA damage-induced 'Lys-63'-linked polyubiquitination by PRPF19 mediates ATRIP recruitment to the RPA complex at sites of DNA damage and activation of ATR. Ubiquitinated by RFWD3 at stalled replication forks in response to DNA damage: ubiquitination by RFWD3 does not lead to degradation by the proteasome and promotes removal of the RPA complex from stalled replication forks, promoting homologous recombination. Sumoylated on lysine residues Lys-449 and Lys-577, with Lys-449 being the major site. Sumoylation promotes recruitment of RAD51 to the DNA damage foci to initiate DNA repair through homologous recombination. Desumoylated by SENP6. In terms of processing, poly-ADP-ribosylated by PARP1; promoting recruitment of HTATSF1.

It localises to the nucleus. The protein localises to the PML body. In terms of biological role, as part of the heterotrimeric replication protein A complex (RPA/RP-A), binds and stabilizes single-stranded DNA intermediates, that form during DNA replication or upon DNA stress. It prevents their reannealing and in parallel, recruits and activates different proteins and complexes involved in DNA metabolism. Thereby, it plays an essential role both in DNA replication and the cellular response to DNA damage. In the cellular response to DNA damage, the RPA complex controls DNA repair and DNA damage checkpoint activation. Through recruitment of ATRIP activates the ATR kinase a master regulator of the DNA damage response. It is required for the recruitment of the DNA double-strand break repair factors RAD51 and RAD52 to chromatin in response to DNA damage. Also recruits to sites of DNA damage proteins like XPA and XPG that are involved in nucleotide excision repair and is required for this mechanism of DNA repair. Also plays a role in base excision repair (BER) probably through interaction with UNG. Also recruits SMARCAL1/HARP, which is involved in replication fork restart, to sites of DNA damage. May also play a role in telomere maintenance. The polypeptide is Replication protein A 70 kDa DNA-binding subunit (RPA1) (Pongo abelii (Sumatran orangutan)).